We begin with the raw amino-acid sequence, 715 residues long: uncharacterized protein (715 aa).

A helical membrane pass occupies residues 688–708 (VWKFNPALYSTITNIFLLIIF).

Belongs to the plectrovirus ORF1 family.

It is found in the host membrane. This is an uncharacterized protein from Spiroplasma virus SpV1-R8A2 B (SpV1).